The primary structure comprises 596 residues: Germinal center kinase 3 (596 aa).

Residues 1-54 are compositionally biased toward low complexity; sequence MSSSNLAGNTNTTTTSSAASAAAAHSAANASTITSEYSTTQTTTGTFNTDTLSS. Residues 1–80 form a disordered region; the sequence is MSSSNLAGNT…PPPPPQVSSP (80 aa). T13 and T32 each carry phosphothreonine; by autocatalysis. Residues 67-77 are compositionally biased toward pro residues; the sequence is SQPPPPPPPQV. Residues 108-386 form the Protein kinase domain; it reads YKLDESIGVG…ASELLKYSFF (279 aa). ATP-binding positions include 114–122 and K137; that span reads IGVGATATV. At S190 the chain carries Phosphoserine; by autocatalysis. Catalysis depends on D240, which acts as the Proton acceptor. Residue T280 is modified to Phosphothreonine. A Phosphoserine; by autocatalysis modification is found at S405. At S419 the chain carries Phosphoserine. Residues 429–496 form a disordered region; it reads NWEFEYDSPQ…EGGGATTPCP (68 aa). Residues 432 to 450 show a composition bias toward acidic residues; it reads FEYDSPQESDDDSDLEDEE. The segment covering 466–479 has biased composition (gly residues); the sequence is GAAGAAGGATGGAA.

This sequence belongs to the protein kinase superfamily. STE Ser/Thr protein kinase family. STE20 subfamily. In terms of assembly, interacts (via C-terminus) with clh-3; required for the phosphorylation-mediated inhibition of clh-3 function. Interacts (via C-terminus) with wnk-1; the interaction is direct. In terms of processing, phosphorylated at Thr-280 and Ser-419 probably by wnk-1; phosphorylation results in weak activation. Predominantly autophosphorylated at Thr-32 and Ser-190 and weakly autophosphorylated at Thr-13 and Ser-405 in vitro. Ubiquitously expressed with a higher expression in the excretory cell. Expressed in both male and female germ cells; up-regulated in maturing spermatocytes but absent in mature sperm.

It localises to the cytoplasm. It is found in the nucleus. It carries out the reaction L-seryl-[protein] + ATP = O-phospho-L-seryl-[protein] + ADP + H(+). The enzyme catalyses L-threonyl-[protein] + ATP = O-phospho-L-threonyl-[protein] + ADP + H(+). Its function is as follows. Plays a role in osmotic stress responses by regulating ion homeostasis and by controlling cell volume via the phosphorylation-mediated inhibition of the chloride channel clh-3. In addition, increases gpdh-1 translation upon osmotic stress, likely downstream of wnk-1. Involved in several developmental processes including the tubular formation of the excretory canals, the formation of the intestine and the progression through larval stages. In addition, required for germ line development by controlling meiosis and chromosomal segregation during spermatogenesis. By controlling clh-3 activity, may regulate the development of the excretory canals and fertility. In Caenorhabditis elegans, this protein is Germinal center kinase 3.